A 521-amino-acid chain; its full sequence is Protein nucleotidyltransferase YdiU (521 aa).

ATP-binding residues include Gly109, Gly111, Arg112, Lys131, Asp143, Gly144, Arg194, and Arg201. Asp270 acts as the Proton acceptor in catalysis. Residues Asn271 and Asp280 each coordinate Mg(2+). Asp280 contributes to the ATP binding site.

Belongs to the SELO family. Mg(2+) is required as a cofactor. The cofactor is Mn(2+).

It carries out the reaction L-seryl-[protein] + ATP = 3-O-(5'-adenylyl)-L-seryl-[protein] + diphosphate. It catalyses the reaction L-threonyl-[protein] + ATP = 3-O-(5'-adenylyl)-L-threonyl-[protein] + diphosphate. The enzyme catalyses L-tyrosyl-[protein] + ATP = O-(5'-adenylyl)-L-tyrosyl-[protein] + diphosphate. The catalysed reaction is L-histidyl-[protein] + UTP = N(tele)-(5'-uridylyl)-L-histidyl-[protein] + diphosphate. It carries out the reaction L-seryl-[protein] + UTP = O-(5'-uridylyl)-L-seryl-[protein] + diphosphate. It catalyses the reaction L-tyrosyl-[protein] + UTP = O-(5'-uridylyl)-L-tyrosyl-[protein] + diphosphate. Nucleotidyltransferase involved in the post-translational modification of proteins. It can catalyze the addition of adenosine monophosphate (AMP) or uridine monophosphate (UMP) to a protein, resulting in modifications known as AMPylation and UMPylation. This Burkholderia mallei (strain ATCC 23344) protein is Protein nucleotidyltransferase YdiU.